Here is a 366-residue protein sequence, read N- to C-terminus: Cobalt-precorrin-5B C(1)-methyltransferase (366 aa).

It belongs to the CbiD family.

The catalysed reaction is Co-precorrin-5B + S-adenosyl-L-methionine = Co-precorrin-6A + S-adenosyl-L-homocysteine. Its pathway is cofactor biosynthesis; adenosylcobalamin biosynthesis; cob(II)yrinate a,c-diamide from sirohydrochlorin (anaerobic route): step 6/10. Functionally, catalyzes the methylation of C-1 in cobalt-precorrin-5B to form cobalt-precorrin-6A. The chain is Cobalt-precorrin-5B C(1)-methyltransferase from Pseudomonas aeruginosa (strain UCBPP-PA14).